A 110-amino-acid chain; its full sequence is Large ribosomal subunit protein uL22 (110 aa).

This sequence belongs to the universal ribosomal protein uL22 family. As to quaternary structure, part of the 50S ribosomal subunit.

This protein binds specifically to 23S rRNA; its binding is stimulated by other ribosomal proteins, e.g. L4, L17, and L20. It is important during the early stages of 50S assembly. It makes multiple contacts with different domains of the 23S rRNA in the assembled 50S subunit and ribosome. Functionally, the globular domain of the protein is located near the polypeptide exit tunnel on the outside of the subunit, while an extended beta-hairpin is found that lines the wall of the exit tunnel in the center of the 70S ribosome. This is Large ribosomal subunit protein uL22 from Photorhabdus laumondii subsp. laumondii (strain DSM 15139 / CIP 105565 / TT01) (Photorhabdus luminescens subsp. laumondii).